The chain runs to 93 residues: Cobalt transport protein CbiN (93 aa).

Helical transmembrane passes span leucine 5–glycine 25 and serine 62–tyrosine 82.

This sequence belongs to the CbiN family. Forms an energy-coupling factor (ECF) transporter complex composed of an ATP-binding protein (A component, CbiO), a transmembrane protein (T component, CbiQ) and 2 possible substrate-capture proteins (S components, CbiM and CbiN) of unknown stoichimetry.

It localises to the cell inner membrane. It participates in cofactor biosynthesis; adenosylcobalamin biosynthesis. Its function is as follows. Part of the energy-coupling factor (ECF) transporter complex CbiMNOQ involved in cobalt import. The chain is Cobalt transport protein CbiN from Citrobacter koseri (strain ATCC BAA-895 / CDC 4225-83 / SGSC4696).